The sequence spans 311 residues: HPr kinase/phosphorylase (311 aa).

Residues H138 and K159 contribute to the active site. Position 153–160 (153–160) interacts with ATP; that stretch reads GDSGIGKS. S160 lines the Mg(2+) pocket. Catalysis depends on D177, which acts as the Proton acceptor; for phosphorylation activity. Proton donor; for dephosphorylation activity. An important for the catalytic mechanism of both phosphorylation and dephosphorylation region spans residues 201–210; sequence IEIRGVGIID. E202 lines the Mg(2+) pocket. Residue R243 is part of the active site. Residues 264–269 are important for the catalytic mechanism of dephosphorylation; sequence PVKTGR.

This sequence belongs to the HPrK/P family. In terms of assembly, homohexamer. Requires Mg(2+) as cofactor.

It carries out the reaction [HPr protein]-L-serine + ATP = [HPr protein]-O-phospho-L-serine + ADP + H(+). It catalyses the reaction [HPr protein]-O-phospho-L-serine + phosphate + H(+) = [HPr protein]-L-serine + diphosphate. Its function is as follows. Catalyzes the ATP- as well as the pyrophosphate-dependent phosphorylation of a specific serine residue in HPr, a phosphocarrier protein of the phosphoenolpyruvate-dependent sugar phosphotransferase system (PTS). HprK/P also catalyzes the pyrophosphate-producing, inorganic phosphate-dependent dephosphorylation (phosphorolysis) of seryl-phosphorylated HPr (P-Ser-HPr). The two antagonistic activities of HprK/P are regulated by several intracellular metabolites, which change their concentration in response to the absence or presence of rapidly metabolisable carbon sources (glucose, fructose, etc.) in the growth medium. Therefore, by controlling the phosphorylation state of HPr, HPrK/P is a sensor enzyme that plays a major role in the regulation of carbon metabolism and sugar transport: it mediates carbon catabolite repression (CCR), and regulates PTS-catalyzed carbohydrate uptake and inducer exclusion. This chain is HPr kinase/phosphorylase, found in Streptococcus pneumoniae (strain 70585).